Reading from the N-terminus, the 159-residue chain is Phosphopantetheine adenylyltransferase (159 aa).

Ser-9 lines the substrate pocket. ATP contacts are provided by residues Ser-9–Phe-10 and His-17. Positions 41, 74, and 88 each coordinate substrate. ATP contacts are provided by residues Gly-89 to Arg-91, Glu-99, and Tyr-123 to Thr-129.

This sequence belongs to the bacterial CoaD family. Homohexamer. Mg(2+) serves as cofactor.

It localises to the cytoplasm. The enzyme catalyses (R)-4'-phosphopantetheine + ATP + H(+) = 3'-dephospho-CoA + diphosphate. It functions in the pathway cofactor biosynthesis; coenzyme A biosynthesis; CoA from (R)-pantothenate: step 4/5. In terms of biological role, reversibly transfers an adenylyl group from ATP to 4'-phosphopantetheine, yielding dephospho-CoA (dPCoA) and pyrophosphate. In Arthrobacter sp. (strain FB24), this protein is Phosphopantetheine adenylyltransferase.